Reading from the N-terminus, the 883-residue chain is Phosphoenolpyruvate carboxylase (883 aa).

Catalysis depends on residues His138 and Lys546.

The protein belongs to the PEPCase type 1 family. Mg(2+) is required as a cofactor.

The catalysed reaction is oxaloacetate + phosphate = phosphoenolpyruvate + hydrogencarbonate. In terms of biological role, forms oxaloacetate, a four-carbon dicarboxylic acid source for the tricarboxylic acid cycle. This Erwinia tasmaniensis (strain DSM 17950 / CFBP 7177 / CIP 109463 / NCPPB 4357 / Et1/99) protein is Phosphoenolpyruvate carboxylase.